Consider the following 505-residue polypeptide: Putative diacyglycerol O-acyltransferase MT0919 (505 aa).

H167 acts as the Proton acceptor in catalysis.

It belongs to the long-chain O-acyltransferase family.

It catalyses the reaction an acyl-CoA + a 1,2-diacyl-sn-glycerol = a triacyl-sn-glycerol + CoA. Its pathway is glycerolipid metabolism; triacylglycerol biosynthesis. This chain is Putative diacyglycerol O-acyltransferase MT0919, found in Mycobacterium tuberculosis (strain CDC 1551 / Oshkosh).